Reading from the N-terminus, the 492-residue chain is Probable glycine dehydrogenase (decarboxylating) subunit 2 (492 aa).

Lysine 274 carries the N6-(pyridoxal phosphate)lysine modification.

The protein belongs to the GcvP family. C-terminal subunit subfamily. As to quaternary structure, the glycine cleavage system is composed of four proteins: P, T, L and H. In this organism, the P 'protein' is a heterodimer of two subunits. Requires pyridoxal 5'-phosphate as cofactor.

The enzyme catalyses N(6)-[(R)-lipoyl]-L-lysyl-[glycine-cleavage complex H protein] + glycine + H(+) = N(6)-[(R)-S(8)-aminomethyldihydrolipoyl]-L-lysyl-[glycine-cleavage complex H protein] + CO2. Functionally, the glycine cleavage system catalyzes the degradation of glycine. The P protein binds the alpha-amino group of glycine through its pyridoxal phosphate cofactor; CO(2) is released and the remaining methylamine moiety is then transferred to the lipoamide cofactor of the H protein. In Staphylococcus haemolyticus (strain JCSC1435), this protein is Probable glycine dehydrogenase (decarboxylating) subunit 2.